A 276-amino-acid polypeptide reads, in one-letter code: Phospholipid phosphatase 2 (276 aa).

The Cytoplasmic portion of the chain corresponds to methionine 1–arginine 4. The helical transmembrane segment at tryptophan 5–leucine 25 threads the bilayer. Topologically, residues threonine 26 to threonine 51 are lumenal. A helical membrane pass occupies residues isoleucine 52 to glycine 72. Topologically, residues glutamate 73–asparagine 87 are cytoplasmic. The helical transmembrane segment at phenylalanine 88 to valine 108 threads the bilayer. Residues serine 109–leucine 161 lie on the Lumenal side of the membrane. Residues lysine 117 to proline 125 form a phosphatase sequence motif I region. Residues asparagine 139 and asparagine 155 are each glycosylated (N-linked (GlcNAc...) asparagine). A helical transmembrane segment spans residues serine 162 to valine 182. The interval tyrosine 164 to histidine 167 is phosphatase sequence motif II. Histidine 167 (proton donors) is an active-site residue. At glutamine 183–lysine 189 the chain is on the cytoplasmic side. Residues tryptophan 190–glycine 210 traverse the membrane as a helical segment. Topologically, residues tyrosine 211–lysine 218 are lumenal. Positions threonine 212–aspartate 223 are phosphatase sequence motif III. Catalysis depends on histidine 219, which acts as the Nucleophile. The helical transmembrane segment at histidine 219–valine 239 threads the bilayer. Topologically, residues arginine 240–proline 276 are cytoplasmic. Residues proline 251–proline 276 are disordered.

It belongs to the PA-phosphatase related phosphoesterase family. Forms functional homodimers and homooligomers. Can also form heterooligomers with PLPP1 and PLPP3. N-glycosylated. In terms of tissue distribution, expressed at high levels in lung, liver and kidney; at low levels in heart and brain, and was not detected in skeletal muscle.

Its subcellular location is the membrane. It is found in the cell membrane. It localises to the early endosome membrane. The protein resides in the endoplasmic reticulum membrane. The catalysed reaction is a 1,2-diacyl-sn-glycero-3-phosphate + H2O = a 1,2-diacyl-sn-glycerol + phosphate. It catalyses the reaction 1,2-dihexadecanoyl-sn-glycero-3-phosphate + H2O = 1,2-dihexadecanoyl-sn-glycerol + phosphate. It carries out the reaction 1,2-di-(9Z-octadecenoyl)-sn-glycero-3-phosphate + H2O = 1,2-di-(9Z-octadecenoyl)-sn-glycerol + phosphate. The enzyme catalyses a monoacyl-sn-glycero-3-phosphate + H2O = a monoacylglycerol + phosphate. The catalysed reaction is (9Z)-octadecenoyl-sn-glycero-3-phosphate + H2O = (9Z-octadecenoyl)-glycerol + phosphate. It catalyses the reaction sphing-4-enine 1-phosphate + H2O = sphing-4-enine + phosphate. It carries out the reaction an N-acylsphing-4-enine 1-phosphate + H2O = an N-acylsphing-4-enine + phosphate. The enzyme catalyses N-(octanoyl)-sphing-4-enine-1-phosphate + H2O = N-octanoylsphing-4-enine + phosphate. The catalysed reaction is N-(9Z-octadecenoyl)-ethanolamine phosphate + H2O = N-(9Z-octadecenoyl) ethanolamine + phosphate. It functions in the pathway lipid metabolism; phospholipid metabolism. Magnesium-independent phospholipid phosphatase. Insensitive to N-ethylmaleimide. Magnesium-independent phospholipid phosphatase that catalyzes the dephosphorylation of a variety of glycerolipid and sphingolipid phosphate esters including phosphatidate/PA, lysophosphatidate/LPA, sphingosine 1-phosphate/S1P and ceramide 1-phosphate/C1P. Has no apparent extracellular phosphatase activity and therefore most probably acts intracellularly. Also acts on N-oleoyl ethanolamine phosphate/N-(9Z-octadecenoyl)-ethanolamine phosphate, a potential physiological compound. Through dephosphorylation of these bioactive lipid mediators produces new bioactive compounds and may regulate signal transduction in different cellular processes. Indirectly regulates, for instance, cell cycle G1/S phase transition through its phospholipid phosphatase activity. This chain is Phospholipid phosphatase 2, found in Mus musculus (Mouse).